Reading from the N-terminus, the 338-residue chain is NADPH dehydrogenase (338 aa).

22-25 (SPMC) lines the FMN pocket. Tyrosine 27 contacts substrate. The FMN site is built by alanine 59 and glutamine 101. A substrate-binding site is contributed by 163 to 166 (HAAH). FMN is bound by residues arginine 214 and 306–307 (GR).

It belongs to the NADH:flavin oxidoreductase/NADH oxidase family. NamA subfamily. As to quaternary structure, homotetramer. It depends on FMN as a cofactor.

The enzyme catalyses A + NADPH + H(+) = AH2 + NADP(+). Its function is as follows. Catalyzes the reduction of the double bond of an array of alpha,beta-unsaturated aldehydes and ketones. It also reduces the nitro group of nitroester and nitroaromatic compounds. It could have a role in detoxification processes. The polypeptide is NADPH dehydrogenase (Listeria monocytogenes serotype 4a (strain HCC23)).